The following is a 548-amino-acid chain: 5-epi-aristolochene synthase (548 aa).

5 residues coordinate (2E,6E)-farnesyl diphosphate: Arg-264, Asp-301, Asp-305, Arg-441, and Asp-444. Mg(2+)-binding residues include Asp-301 and Asp-305. The DDXXD motif motif lies at 301 to 305; that stretch reads DDTFD. Mg(2+)-binding residues include Asp-444, Asp-445, Thr-448, and Glu-452.

Belongs to the terpene synthase family. As to quaternary structure, monomer. The cofactor is Mg(2+). Post-translationally, self-alkylated at Tyr-520 in the presence of (2Z,6E)-farnesyl diphosphate ((Z,E)-FPP). Self-alkylated at Asp-444 at warm temperature (42 degrees Celsius) in the presence of (2E,6E)-farnesyl diphosphate ((E,E)-FPP).

It localises to the cytoplasm. The enzyme catalyses (2E,6E)-farnesyl diphosphate = (+)-5-epi-aristolochene + diphosphate. It carries out the reaction (2Z,6E)-farnesyl diphosphate = (+)-2-epi-prezizaene + diphosphate. The catalysed reaction is (2Z,6E)-farnesyl diphosphate = (-)-alpha-cedrene + diphosphate. It catalyses the reaction (2Z,6E)-farnesyl diphosphate = (-)-beta-curcumene + diphosphate. It participates in secondary metabolite biosynthesis; terpenoid biosynthesis. Inhibited activity toward farnesyl diphosphate (FPP) by anilinogeranyl diphosphate (AGPP); AGPP undergoes a cyclization event leading to the formation of a novel macrocyclic paracyclophane alkaloid. Repressed by sesquilavandulyl diphosphate (SPP) via the induction of self-alkyation. Catalyzes the cyclization of trans,trans-farnesyl diphosphate (FPP) to the bicyclic intermediate 5-epi-aristolochene, initial step in the conversion of FPP to the sesquiterpenoid antifungal phytoalexin capsidiol. Produces germacrene A as an enzyme-bound intermediate that is not released by the enzyme, but is further cyclized to produce the bicyclic 5-epi-aristolochene. Mediates, at low levels, the formation of 4-epi-eremophilene and premnaspirodiene from trans,trans-farnesyl diphosphate. Also mediates the conversion of cis,trans-farnesyl diphosphate to cisoid minor products such as (+)-2-epi-prezizaene, (-)-alpha-cedrene and, to a lesser extent, (-)-beta-curcumene; also produces, at low levels, alpha-acoradiene and 4-epi-alpha-acoradiene, but barely nerolidol, alpha-bisabolol, epi-alpha-bisabolol and cis-farnesol. The protein is 5-epi-aristolochene synthase (EAS3) of Nicotiana tabacum (Common tobacco).